The primary structure comprises 436 residues: GTPase Der (436 aa).

2 consecutive EngA-type G domains span residues 4–167 and 175–351; these read PTVA…PNEI and IKFS…HAQN. GTP contacts are provided by residues 10 to 17, 57 to 61, 119 to 122, 181 to 188, 229 to 233, and 294 to 297; these read GRPNVGKS, DTGGI, NKVD, DTAGM, and NKWD. A KH-like domain is found at 352-436; sequence LRISSSVLND…PIHLIARKRK (85 aa).

This sequence belongs to the TRAFAC class TrmE-Era-EngA-EngB-Septin-like GTPase superfamily. EngA (Der) GTPase family. In terms of assembly, associates with the 50S ribosomal subunit.

Functionally, GTPase that plays an essential role in the late steps of ribosome biogenesis. This is GTPase Der from Lactococcus lactis subsp. cremoris (strain SK11).